The sequence spans 132 residues: DNA-entry nuclease inhibitor (132 aa).

This protein is a subunit of a 75 kDa protein complex, which governs binding and entry of donor DNA. The complex is a tetramer of two subunits of the DNA-entry nuclease and two subunits of a competence-specific protein. Only the complex is able to bind ds- and ss-DNA.

The protein resides in the cell membrane. Its function is as follows. Plays a role in the competence of cells to be transformed. It inhibits the activity of the DNA-entry nuclease. The sequence is that of DNA-entry nuclease inhibitor (nin) from Bacillus subtilis (strain 168).